The primary structure comprises 86 residues: Toxin CSTX-20 (86 aa).

As to expression, expressed by the venom gland.

The protein localises to the secreted. The chain is Toxin CSTX-20 from Cupiennius salei (American wandering spider).